Consider the following 543-residue polypeptide: Tapetal oleosin GRP-17 (543 aa).

The tract at residues 1–67 (MSEELSQKPS…FLMPLLEVIK (67 aa)) is polar. Helical transmembrane passes span 68-88 (IIIASVASVIFVGFACVTLAG), 98-118 (PVFIIFSPVLVPATIATVVLA), and 119-139 (TGFTAGGSFGATALGLIMWLV). Residues 68–162 (IIIASVASVI…PAGLPPNSGA (95 aa)) are hydrophobic. 2 disordered regions span residues 148–169 (KDNPPPAGLPPNSGAGAGGAQS) and 195–543 (GGKK…HMAE). Positions 201 to 212 (SGGGKSKFGGKG) are enriched in gly residues. 3 tandem repeats follow at residues 220–223 (GMSS), 227–230 (GMSG), and 234–237 (GMSG). Positions 220–229 (GMSSGDEGMS) are enriched in low complexity. Residues 220-514 (GMSSGDEGMS…GGMSESGMSG (295 aa)) form a 29 X 4 AA approximate tandem repeats of G-M-S-G region. The span at 230–240 (GSEGGMSGGEG) shows a compositional bias: gly residues. Positions 244 to 256 (KSGKGKLKAKLEK) are enriched in basic residues. A run of 26 repeats spans residues 259–262 (GMSG), 269–272 (GMSG), 276–279 (GMSG), 301–304 (GMSG), 305–308 (GMSG), 312–315 (GMSG), 319–322 (GMSS), 344–347 (SMSG), 348–351 (GMSG), 355–358 (GMSG), 362–365 (GMSG), 387–390 (CMSG), 391–394 (GMSG), 398–401 (GMSR), 405–408 (GISG), 410–413 (GMSG), 414–417 (GSGS), 438–441 (GMSG), 445–448 (GMSG), 458–461 (GSMS), 464–467 (GMSG), 468–471 (GSGS), 492–495 (GMSG), 499–502 (GMSG), 506–509 (GMSE), and 511–514 (GMSG). The span at 272-283 (GSEGGMSGGGGS) shows a compositional bias: gly residues. Basic residues predominate over residues 285 to 301 (SKSKKSKLKAKLGKKKG). Gly residues predominate over residues 315–326 (GSEGGMSSGGGS). Residues 328 to 344 (SKSKKSKLKAKLGKKKS) are compositionally biased toward basic residues. Positions 345-357 (MSGGMSGSEEGMS) are enriched in low complexity. A compositionally biased stretch (gly residues) spans 358-370 (GSEGGMSGGGGGK). The segment covering 371-387 (SKSRKSKLKANLGKKKC) has biased composition (basic residues). Composition is skewed to gly residues over residues 405 to 416 (GISGGGMSGGSG) and 440 to 470 (SGSGGGMSGSEGGVSGSEGSMSGGGMSGGSG). The span at 471–492 (SKHKIGGGKHGGLRGKFGKKRG) shows a compositional bias: basic residues. Gly residues predominate over residues 495-505 (GSEGGMSGSEG). Positions 518 to 531 (GKHKIGGGKHKFGG) are enriched in basic residues. The segment covering 532-543 (GKHGGGGGHMAE) has biased composition (gly residues).

This sequence belongs to the oleosin family. Post-translationally, proteolytically cleaved following anther tapetal breakdown. In terms of tissue distribution, flower specific, especially in anther tapetum, pollen (at protein level) and flowers florets.

Its subcellular location is the secreted. The protein localises to the extracellular space. It localises to the extracellular matrix. It is found in the pollen coat. The protein resides in the lipid droplet. Its subcellular location is the membrane. In terms of biological role, lipid-binding oleosin pollen coat protein required to mediate pollen recognition by stigma cells and subsequent pollen hydration. Involved in anther tapetum development, especially for the physiology of tapetosomes. Also implicated in the formation of pollen coat. This Arabidopsis thaliana (Mouse-ear cress) protein is Tapetal oleosin GRP-17.